We begin with the raw amino-acid sequence, 314 residues long: Jacalin-related lectin 9 (314 aa).

The first 23 residues, 1 to 23, serve as a signal peptide directing secretion; that stretch reads MIFIYIFLFLSSAIIDSNGFAMA. 2 consecutive Jacalin-type lectin domains span residues 24-165 and 168-313; these read QKLE…YLTK and PTKS…YFSP.

Belongs to the jacalin lectin family.

This Arabidopsis thaliana (Mouse-ear cress) protein is Jacalin-related lectin 9 (JAL9).